A 195-amino-acid chain; its full sequence is Inner membrane protein YohC (195 aa).

The Cytoplasmic segment spans residues 1-32 (MSHVWGLFSHPDREMQVINRENETISHHYTHH). Residues 33 to 55 (VLLMAAIPVICAFIGTTQIGWNF) form a helical membrane-spanning segment. At 56-64 (GDGTILKLS) the chain is on the periplasmic side. The helical transmembrane segment at 65–87 (WFTGLALAVLFYGVMLAGVAVMG) threads the bilayer. The Cytoplasmic portion of the chain corresponds to 88–107 (RVIWWMARNYPQRPSLAHCM). The chain crosses the membrane as a helical span at residues 108-130 (VFAGYVATPLFLSGLVALYPLVW). Topologically, residues 131-134 (LCAL) are periplasmic. The helical transmembrane segment at 135-157 (VGTVALFYTGYLLYLGIPSFLNI) threads the bilayer. Residues 158–169 (NKEEGLSFSSST) are Cytoplasmic-facing. Residues 170-192 (LAIGVLVLEVLLALTVILWGYGY) form a helical membrane-spanning segment. Residues 193 to 195 (RLF) are Periplasmic-facing.

Its subcellular location is the cell inner membrane. In Escherichia coli O6:H1 (strain CFT073 / ATCC 700928 / UPEC), this protein is Inner membrane protein YohC (yohC).